We begin with the raw amino-acid sequence, 809 residues long: Glycerol-3-phosphate acyltransferase (809 aa).

The HXXXXD motif signature appears at 309-314; sequence HRSHMD.

It belongs to the GPAT/DAPAT family.

It localises to the cell inner membrane. The enzyme catalyses sn-glycerol 3-phosphate + an acyl-CoA = a 1-acyl-sn-glycero-3-phosphate + CoA. It functions in the pathway phospholipid metabolism; CDP-diacylglycerol biosynthesis; CDP-diacylglycerol from sn-glycerol 3-phosphate: step 1/3. The chain is Glycerol-3-phosphate acyltransferase from Shewanella oneidensis (strain ATCC 700550 / JCM 31522 / CIP 106686 / LMG 19005 / NCIMB 14063 / MR-1).